Reading from the N-terminus, the 435-residue chain is 4-hydroxy-3-methylbut-2-en-1-yl diphosphate synthase (flavodoxin) (435 aa).

The segment covering 1–15 has biased composition (basic and acidic residues); that stretch reads MTDVDLRARPQEGMK. Residues 1–24 form a disordered region; it reads MTDVDLRARPQEGMKEIPAGPKGR. Residues Cys316, Cys319, Cys362, and Glu369 each contribute to the [4Fe-4S] cluster site.

Belongs to the IspG family. Requires [4Fe-4S] cluster as cofactor.

It carries out the reaction (2E)-4-hydroxy-3-methylbut-2-enyl diphosphate + oxidized [flavodoxin] + H2O + 2 H(+) = 2-C-methyl-D-erythritol 2,4-cyclic diphosphate + reduced [flavodoxin]. It functions in the pathway isoprenoid biosynthesis; isopentenyl diphosphate biosynthesis via DXP pathway; isopentenyl diphosphate from 1-deoxy-D-xylulose 5-phosphate: step 5/6. Functionally, converts 2C-methyl-D-erythritol 2,4-cyclodiphosphate (ME-2,4cPP) into 1-hydroxy-2-methyl-2-(E)-butenyl 4-diphosphate. In Afipia carboxidovorans (strain ATCC 49405 / DSM 1227 / KCTC 32145 / OM5) (Oligotropha carboxidovorans), this protein is 4-hydroxy-3-methylbut-2-en-1-yl diphosphate synthase (flavodoxin).